A 292-amino-acid polypeptide reads, in one-letter code: Golgi to ER traffic protein 2 (292 aa).

Positions 1–18 (MSELSAEEKRKLLRERRQ) are enriched in basic and acidic residues. The interval 1 to 80 (MSELSAEEKR…TPLHDDPEVP (80 aa)) is disordered. Residues 1 to 158 (MSELSAEEKR…SQYHAYEQKQ (158 aa)) are Cytoplasmic-facing. 2 stretches are compositionally biased toward polar residues: residues 29 to 47 (RLNN…NVTS) and 55 to 71 (ATTT…QSPT). Residues 159–179 (WKARFLVVRWIIHTLNFVYHY) traverse the membrane as a helical segment. Over 180–205 (IASGYKLSASPYAFVRAQAVDSHVRT) the chain is Lumenal. The helical transmembrane segment at 206-225 (FFTAFLTVEVAVISAYFLVM) threads the bilayer. Over 226–268 (SQPKFKDFSRENLVSRILSMASAVVPAVGRYQPLVTRALVYWN) the chain is Cytoplasmic. A helical membrane pass occupies residues 269–289 (GASIFVGDLMLMVFYFGITSV). At 290-292 (LGN) the chain is on the lumenal side.

This sequence belongs to the GET2 family. Component of the Golgi to ER traffic (GET) complex, which is composed of GET1, GET2 and GET3. Within the complex, GET1 and GET2 form a heterotetramer which is stabilized by phosphatidylinositol binding and which binds to the GET3 homodimer.

Its subcellular location is the endoplasmic reticulum membrane. The protein localises to the golgi apparatus membrane. Required for the post-translational delivery of tail-anchored (TA) proteins to the endoplasmic reticulum. Together with GET1, acts as a membrane receptor for soluble GET3, which recognizes and selectively binds the transmembrane domain of TA proteins in the cytosol. The GET complex cooperates with the HDEL receptor ERD2 to mediate the ATP-dependent retrieval of resident ER proteins that contain a C-terminal H-D-E-L retention signal from the Golgi to the ER. This chain is Golgi to ER traffic protein 2, found in Clavispora lusitaniae (strain ATCC 42720) (Yeast).